The sequence spans 634 residues: Chaperone protein HtpG (634 aa).

Residues Met1–Arg345 form an a; substrate-binding region. The tract at residues Glu346–Lys562 is b. The c stretch occupies residues Leu563–Ala634.

It belongs to the heat shock protein 90 family. In terms of assembly, homodimer.

It is found in the cytoplasm. Molecular chaperone. Has ATPase activity. The protein is Chaperone protein HtpG of Psychromonas ingrahamii (strain DSM 17664 / CCUG 51855 / 37).